The sequence spans 22 residues: Melittin-related peptide FQ-22-1 (22 aa).

Glutamine amide is present on Q22.

As to expression, expressed by the skin glands.

The protein localises to the secreted. This is Melittin-related peptide FQ-22-1 from Rana arvalis (Moor frog).